A 129-amino-acid chain; its full sequence is UPF0047 protein Mb2586c (129 aa).

The protein belongs to the UPF0047 family.

This chain is UPF0047 protein Mb2586c, found in Mycobacterium bovis (strain ATCC BAA-935 / AF2122/97).